We begin with the raw amino-acid sequence, 419 residues long: MQKNIIDELTWRDAINQQTDADGLRELTEKKSISLYCGVDPTGDSMHIGHLIPFMMMKRFQLAGHHPYIVIGGGTGSIGDPSGRKSERQLQTMEMVQHNVEALSGQMKRLFGEDANVSMVNNYDWLSKISLLDFLRDYGKLFNINTMLAKDVVASRLDVGISFTEFTYQILQSVDFMHLYKAHDVQLQIGGADQWGNITSGIDMIHKIEGSETEVYGLTIPLMLKADGTKFGKTAGGAIWLDPEKTTPYEFYQFWLNQDDRDVVKYLKYFTFLDEAEINELAKTVETAPEKREAQRRLAEEVTRFVHGQAELEGAQKITEVLFSGDIKALDVKEAEQAFQKAPTVEITAEKKNIVDFLVDAGIESSKRQAREDVQNGAITINGDRLRETTLEIDPSENFEGKFVIVRRGKKKYFLARVK.

Residue tyrosine 36 participates in L-tyrosine binding. The 'HIGH' region motif lies at 41 to 50; the sequence is PTGDSMHIGH. Residues tyrosine 168 and glutamine 172 each contribute to the L-tyrosine site. Positions 230-234 match the 'KMSKS' region motif; the sequence is KFGKT. ATP is bound at residue lysine 233. Residues 352 to 419 form the S4 RNA-binding domain; it reads KNIVDFLVDA…KKKYFLARVK (68 aa).

It belongs to the class-I aminoacyl-tRNA synthetase family. TyrS type 1 subfamily. As to quaternary structure, homodimer.

It is found in the cytoplasm. The catalysed reaction is tRNA(Tyr) + L-tyrosine + ATP = L-tyrosyl-tRNA(Tyr) + AMP + diphosphate + H(+). Functionally, catalyzes the attachment of tyrosine to tRNA(Tyr) in a two-step reaction: tyrosine is first activated by ATP to form Tyr-AMP and then transferred to the acceptor end of tRNA(Tyr). This chain is Tyrosine--tRNA ligase, found in Latilactobacillus sakei subsp. sakei (strain 23K) (Lactobacillus sakei subsp. sakei).